Consider the following 414-residue polypeptide: Histidinol dehydrogenase (414 aa).

NAD(+) contacts are provided by tyrosine 116, glutamine 177, and asparagine 200. Substrate-binding residues include threonine 223, glutamine 245, and histidine 248. The Zn(2+) site is built by glutamine 245 and histidine 248. Residues glutamate 313 and histidine 314 each act as proton acceptor in the active site. Residues histidine 314, aspartate 347, glutamate 401, and histidine 406 each contribute to the substrate site. Zn(2+) is bound at residue aspartate 347. Histidine 406 is a Zn(2+) binding site.

Belongs to the histidinol dehydrogenase family. Zn(2+) is required as a cofactor.

The enzyme catalyses L-histidinol + 2 NAD(+) + H2O = L-histidine + 2 NADH + 3 H(+). It functions in the pathway amino-acid biosynthesis; L-histidine biosynthesis; L-histidine from 5-phospho-alpha-D-ribose 1-diphosphate: step 9/9. Functionally, catalyzes the sequential NAD-dependent oxidations of L-histidinol to L-histidinaldehyde and then to L-histidine. The chain is Histidinol dehydrogenase from Staphylococcus epidermidis (strain ATCC 12228 / FDA PCI 1200).